Reading from the N-terminus, the 450-residue chain is Beclin-1 (450 aa).

Met1 carries the N-acetylmethionine modification. Phosphoserine is present on residues Ser15 and Ser30. Residues Thr48 to Thr72 are disordered. Ser90, Ser93, and Ser96 each carry phosphoserine; by AMPK. Positions Thr108–Ser127 match the BH3 motif. The tract at residues Leu112–Cys159 is interaction with BCL2 and BCL2L1. The residue at position 119 (Thr119) is a Phosphothreonine; by DAPK1. A coiled-coil region spans residues Asp142–Val269. The tract at residues Asp245–Lys450 is evolutionary conserved domain (ECD). Glycyl lysine isopeptide (Lys-Gly) (interchain with G-Cter in ubiquitin) cross-links involve residues Lys402 and Lys437. Residues Trp425–Lys450 form a required for membrane-association region.

This sequence belongs to the beclin family. In terms of assembly, a homodimeric form is proposed to exist; this metastable form readily transits to ATG14- or UVRAG-containing complexes with BECN1:UVRAG being more stable than BECN1:ATG14. Component of the PI3K (PI3KC3/PI3K-III/class III phosphatidylinositol 3-kinase) complex the core of which is composed of the catalytic subunit PIK3C3, the regulatory subunit PIK3R4 and BECN1 associating with additional regulatory/auxiliary subunits to form alternative complex forms. Alternative complex forms containing a fourth regulatory subunit in a mutually exclusive manner are PI3K complex I (PI3KC3-C1) containing ATG14, and PI3K complex II (PI3KC3-C2) containing UVRAG. PI3KC3-C1 displays a V-shaped architecture with PIK3R4 serving as a bridge between PIK3C3 and the ATG14:BECN1 subcomplex. Both, PI3KC3-C1 and PI3KC3-C2, can associate with further regulatory subunits, such as RUBCN, SH3GLB1/Bif-1 and AMBRA1. PI3KC3-C1 probably associates with PIK3CB. Forms a complex with PPP2CA and AMBRA1; AMBRA1 and BECN1 components of the complex regulate MYC stability via different pathways. Component of the complex, at least composed of LRPPRC, BECN1 and BCL2; the interactions prevent BECN1 from forming an autophagy-inducing complex with PIK3C3. Interacts with AMBRA1, GOPC, GRID2. Interacts with BCL2 and BCL2L1 isoform Bcl-X(L); the interaction inhibits BECN1 function in promoting autophagy by interfering with the formation of the PI3K complex. Interacts with cytosolic HMGB1; inhibits the interaction of BECN1 and BCL2 leading to promotion of autophagy. Interacts with USP10, USP13, VMP1, DAPK1, RAB39A. Interacts with the poly-Gln domain of ATXN3; the interaction causes deubiquitination at Lys-402 and stabilizes BECN1. Interacts with SLAMF1. Interacts with TRIM5; the interaction causes activation of BECN1 by causing its dissociation from its inhibitors BCL2 and TAB2. Interacts with active ULK1 (phosphorylated on 'Ser-317') and MEFV simultaneously. Interacts with WDR81 and WDR91; negatively regulates the PI3 kinase/PI3K activity associated with endosomal membranes. Interacts with LAPTM4B; competes with EGFR for LAPTM4B binding; regulates EGFR activity. Interacts with TRIM50. Interacts with TRIM16. Interacts with ATG14; this interaction is increased in the absence of TMEM39A. Interacts with WASHC1; preventing interaction with AMBRA1 and the DCX(AMBRA1) complex and subsequent ubiquitination. Interacts with TRIM17. Interacts with BCL2L10/BCL-B (via BH1 domain). Interacts with SH3BGRL. Interacts with IRGM; enhancing BECN1-interacting partners and influencing the composition of the BECN1 complex. Interacts with ARMC3. Interacts with LRPPRC. Phosphorylation at Thr-119 by DAPK1 reduces its interaction with BCL2 and BCL2L1 and promotes induction of autophagy. In response to autophagic stimuli, phosphorylated at serine residues by AMPK in an ATG14-dependent manner, and this phosphorylation is critical for maximally efficient autophagy. Post-translationally, polyubiquitinated by NEDD4, both with 'Lys-11'- and 'Lys-63'-linkages. 'Lys-11'-linked polyubiquitination leads to degradation and is enhanced when the stabilizing interaction partner VPS34 is depleted. Deubiquitinated by USP10 and USP13, leading to stabilize the PIK3C3/VPS34-containing complexes. Polyubiquitinated at Lys-402 with 'Lys-48'-linkages. 'Lys-48'-linked polyubiquitination of Lys-402 leads to degradation. Deubiquitinated by ATXN3, leading to stabilization. Ubiquitinated at Lys-437 via 'Lys-63'-linkage by the DCX(AMBRA1) complex, thereby increasing the association between BECN1 and PIK3C3 to promote PIK3C3 activity. 'Lys-48'-linked ubiquitination by RNF216 leads to proteasomal degradation and autophagy inhibition. In terms of processing, proteolytically processed by caspases including CASP8 and CASP3; the C-terminal fragments lack autophagy-inducing capacity and are proposed to induce apoptosis. Thus the cleavage is proposed to be an determinant to switch from autophagy to apoptosis pathways affecting cellular homeostasis including viral infections and survival of tumor cells.

It is found in the cytoplasm. Its subcellular location is the golgi apparatus. It localises to the trans-Golgi network membrane. The protein localises to the endosome membrane. The protein resides in the endoplasmic reticulum membrane. It is found in the mitochondrion membrane. Its subcellular location is the cytoplasmic vesicle. It localises to the autophagosome. The protein localises to the mitochondrion. The protein resides in the nucleus. Plays a central role in autophagy. Acts as a core subunit of the PI3K complex that mediates formation of phosphatidylinositol 3-phosphate; different complex forms are believed to play a role in multiple membrane trafficking pathways: PI3KC3-C1 is involved in initiation of autophagosomes and PI3KC3-C2 in maturation of autophagosomes and endocytosis. Involved in regulation of degradative endocytic trafficking and required for the abscission step in cytokinesis, probably in the context of PI3KC3-C2. Essential for the formation of PI3KC3-C2 but not PI3KC3-C1 PI3K complex forms. Involved in endocytosis. May play a role in antiviral host defense. Functionally, beclin-1-C 35 kDa localized to mitochondria can promote apoptosis; it induces the mitochondrial translocation of BAX and the release of proapoptotic factors. The sequence is that of Beclin-1 (BECN1) from Pongo abelii (Sumatran orangutan).